We begin with the raw amino-acid sequence, 240 residues long: Sugar fermentation stimulation protein homolog (240 aa).

The protein belongs to the SfsA family.

This Natranaerobius thermophilus (strain ATCC BAA-1301 / DSM 18059 / JW/NM-WN-LF) protein is Sugar fermentation stimulation protein homolog.